We begin with the raw amino-acid sequence, 678 residues long: MTPSDFISIDYKTLTKAQLKSYIDDLAEYLGEQSYLYHTIDKPVITDSDYDKLFRLLQDLVDDNPQLKPSNSVLDRVGGEILAGFETIKHKKKMTSLANVFSLEELRDFYDKIEYDIELECEPKMDGLAISIFYKNGKFDYAVTRGDGIQGEKVSENVKTIRNVPLKLNTSNPPEELEVRGEIILDKQSFLSLNEYMQTHENKTFANPRNAAAGSIRMLDSKVVAKRPLKLYSYGIGYFSKDFVHPETQFELMNLLQSFGFTISDNMFLAKNFSEVEVYHHKMSHQRADLAYDIDGLVFKVNNIKLQDTIGYTARGPKWAIAYKFPAEEVESEVLNVEFQVGRTGAITPVARLKPVAVGGVIVSNATLHNINEIKRKDIRVGDRVIVRRAGDVIPEVVKSLPQYRKPDAQMVEMPTNCPVCDSAIENINDQAIYRCTGGWHCQAQTTERLKHFVSRKAMDIDKLGAKLIEQLVAADLIKYPADIYKLNFEQLTGLERMGAKSSQNVLDSITKSKEPSLARFIFAIGIKDVGEVSSEALANHFGSLESFREAKFEQLIEINDIGEIIAKNIVSFWQDSLNIQIVDELLGNSINIQNPEKIEQAHNESFTNKTIVITGTFENYNRTELTQLLKSMGAKVTSSVSKKTDMVICGDNAGSKLTKAQDLGVEVIFEEDLQNLL.

NAD(+)-binding positions include 47–51 (DSDYD), 96–97 (SL), and E122. K124 functions as the N6-AMP-lysine intermediate in the catalytic mechanism. NAD(+) contacts are provided by R145, E182, K300, and K324. Residues C418, C421, C436, and C442 each coordinate Zn(2+). One can recognise a BRCT domain in the interval 602 to 678 (AHNESFTNKT…IFEEDLQNLL (77 aa)).

It belongs to the NAD-dependent DNA ligase family. LigA subfamily. It depends on Mg(2+) as a cofactor. The cofactor is Mn(2+).

The catalysed reaction is NAD(+) + (deoxyribonucleotide)n-3'-hydroxyl + 5'-phospho-(deoxyribonucleotide)m = (deoxyribonucleotide)n+m + AMP + beta-nicotinamide D-nucleotide.. Its function is as follows. DNA ligase that catalyzes the formation of phosphodiester linkages between 5'-phosphoryl and 3'-hydroxyl groups in double-stranded DNA using NAD as a coenzyme and as the energy source for the reaction. It is essential for DNA replication and repair of damaged DNA. This Francisella philomiragia subsp. philomiragia (strain ATCC 25017 / CCUG 19701 / FSC 153 / O#319-036) protein is DNA ligase.